The primary structure comprises 122 residues: Large ribosomal subunit protein uL14c (122 aa).

It belongs to the universal ribosomal protein uL14 family. Part of the 50S ribosomal subunit.

It is found in the plastid. Its subcellular location is the chloroplast. Functionally, binds to 23S rRNA. This chain is Large ribosomal subunit protein uL14c, found in Eucalyptus globulus subsp. globulus (Tasmanian blue gum).